The primary structure comprises 310 residues: N-acetyl-gamma-glutamyl-phosphate reductase (310 aa).

The active site involves Cys-117.

Belongs to the NAGSA dehydrogenase family. Type 2 subfamily.

It is found in the cytoplasm. It catalyses the reaction N-acetyl-L-glutamate 5-semialdehyde + phosphate + NADP(+) = N-acetyl-L-glutamyl 5-phosphate + NADPH + H(+). It functions in the pathway amino-acid biosynthesis; L-arginine biosynthesis; N(2)-acetyl-L-ornithine from L-glutamate: step 3/4. Functionally, catalyzes the NADPH-dependent reduction of N-acetyl-5-glutamyl phosphate to yield N-acetyl-L-glutamate 5-semialdehyde. The polypeptide is N-acetyl-gamma-glutamyl-phosphate reductase (Brucella suis (strain ATCC 23445 / NCTC 10510)).